A 364-amino-acid chain; its full sequence is Ribosomal RNA large subunit methyltransferase F (364 aa).

A disordered region spans residues 1–52 (MPKPAIKTAAKLAMSSAGKRGKPSTPKSLAKPQTTKPKTASKLKAKHGEQKR). A compositionally biased stretch (polar residues) spans 25 to 38 (TPKSLAKPQTTKPK).

Belongs to the methyltransferase superfamily. METTL16/RlmF family.

Its subcellular location is the cytoplasm. The enzyme catalyses adenosine(1618) in 23S rRNA + S-adenosyl-L-methionine = N(6)-methyladenosine(1618) in 23S rRNA + S-adenosyl-L-homocysteine + H(+). Specifically methylates the adenine in position 1618 of 23S rRNA. This Shewanella sp. (strain ANA-3) protein is Ribosomal RNA large subunit methyltransferase F.